A 380-amino-acid chain; its full sequence is MIDFPIKYRLIKKEKYTGARLGEIITPHGTFPTPMFMPVGTQATVKTQSPEELKQMGSGIILANTYHLWLRPGDELIAKAGGLHKFMNWDQAILTDSGGFQVYSLAEKRDISEEGVTFKNHLNGSKMFLSPEKAISVQNNLGSDIMMSFDECPQFYQPYDYVKKSIERTSRWAERGLKAHRRPHDQGLFGIVQGAGFEDLRRQSSHDLVSMDFPGYSIGGLAVGETHEEMNAVLDFTVPLLPENKPRYLMGVGAPDSLIDGVIRGVDMYDCVLPTRIARNGTCMTSNGRLVVKNAAYAEDFSPIDPECDCYTCKNYTRAYVRHLLKADETFGIRLTSYHNLYFLVNLMAKVRQAIVDDNLLEFRQDFIEKYGYNASNRNF.

The active-site Proton acceptor is Asp-96. Substrate-binding positions include 96–100 (DSGGF), Asp-150, Gln-193, and Gly-220. Residues 251-257 (GVGAPDS) form an RNA binding region. The Nucleophile role is filled by Asp-270. The segment at 275 to 279 (TRIAR) is RNA binding; important for wobble base 34 recognition. Zn(2+) is bound by residues Cys-308, Cys-310, Cys-313, and His-339.

It belongs to the queuine tRNA-ribosyltransferase family. As to quaternary structure, homodimer. Within each dimer, one monomer is responsible for RNA recognition and catalysis, while the other monomer binds to the replacement base PreQ1. Requires Zn(2+) as cofactor.

It carries out the reaction 7-aminomethyl-7-carbaguanine + guanosine(34) in tRNA = 7-aminomethyl-7-carbaguanosine(34) in tRNA + guanine. It functions in the pathway tRNA modification; tRNA-queuosine biosynthesis. Functionally, catalyzes the base-exchange of a guanine (G) residue with the queuine precursor 7-aminomethyl-7-deazaguanine (PreQ1) at position 34 (anticodon wobble position) in tRNAs with GU(N) anticodons (tRNA-Asp, -Asn, -His and -Tyr). Catalysis occurs through a double-displacement mechanism. The nucleophile active site attacks the C1' of nucleotide 34 to detach the guanine base from the RNA, forming a covalent enzyme-RNA intermediate. The proton acceptor active site deprotonates the incoming PreQ1, allowing a nucleophilic attack on the C1' of the ribose to form the product. After dissociation, two additional enzymatic reactions on the tRNA convert PreQ1 to queuine (Q), resulting in the hypermodified nucleoside queuosine (7-(((4,5-cis-dihydroxy-2-cyclopenten-1-yl)amino)methyl)-7-deazaguanosine). This is Queuine tRNA-ribosyltransferase from Streptococcus thermophilus (strain ATCC BAA-491 / LMD-9).